We begin with the raw amino-acid sequence, 309 residues long: Assembly-complementing factor 4 (309 aa).

Disordered regions lie at residues 1–80 (MSED…ASPI), 164–240 (KSIN…ENTP), and 286–309 (VRSE…LFKR). Composition is skewed to basic and acidic residues over residues 13–24 (ELHKLSIVDKHS) and 34–44 (KQHEVQPESKS). Ser-44, Ser-71, Ser-74, Ser-78, and Ser-165 each carry phosphoserine. Over residues 61–80 (SSPQRSTTNQSPVSDHASPI) the composition is skewed to polar residues. Low complexity-rich tracts occupy residues 174-188 (NNNV…LPNR), 205-214 (PSRSSESTPT), and 222-239 (PRNT…GENT). The span at 287-298 (RSEDEDDEEFEP) shows a compositional bias: acidic residues. Position 288 is a phosphoserine (Ser-288).

In terms of biological role, may be involved in actin cytoskeleton organization and biogenesis. This is Assembly-complementing factor 4 (ACF4) from Saccharomyces cerevisiae (strain ATCC 204508 / S288c) (Baker's yeast).